The following is a 235-amino-acid chain: REF/SRPP-like protein At2g47780 (235 aa).

Over residues 1-12 (MAEDEIVVEEEQ) the composition is skewed to acidic residues. The interval 1 to 32 (MAEDEIVVEEEQSQPQEITPVPPSSSSSPSLV) is disordered.

The protein belongs to the REF/SRPP family.

This chain is REF/SRPP-like protein At2g47780, found in Arabidopsis thaliana (Mouse-ear cress).